The chain runs to 314 residues: MPLEQRSQHCKPEEGLEARGEALGLVGAQAPATEEQEAASSSSTLVEVTLGEVPAAESPDPPQSPQGASSLPTTMNYPLWSQSYEDSSNQEEEGPSTFPDLESEFQAALSRKVAKLVHFLLLKYRAREPVTKAEMLGSVVGNWQYFFPVIFSKASDSLQLVFGIELMEVDPIGHVYIFATCLGLSYDGLLGDNQIMPKTGFLIIILAIIAKEGDCAPEEKIWEELSVLEVFEGREDSIFGDPKKLLTQYFVQENYLEYRQVPGSDPACYEFLWGPRALIETSYVKVLHHMVKISGGPRISYPLLHEWALREGEE.

Basic and acidic residues predominate over residues 1–20 (MPLEQRSQHCKPEEGLEARG). Positions 1 to 99 (MPLEQRSQHC…QEEEGPSTFP (99 aa)) are disordered. Residues 21–44 (EALGLVGAQAPATEEQEAASSSST) show a composition bias toward low complexity. The span at 65–87 (PQGASSLPTTMNYPLWSQSYEDS) shows a compositional bias: polar residues. One can recognise an MAGE domain in the interval 109-308 (LSRKVAKLVH…ISYPLLHEWA (200 aa)).

As to quaternary structure, interacts with TRIM28. Post-translationally, ubiquitinated by the DCX(DCAF12) complex specifically recognizes the diglutamate (Glu-Glu) at the C-terminus, leading to its degradation. Expressed in many tumors of several types, such as melanoma, head and neck squamous cell carcinoma, lung carcinoma and breast carcinoma, but not in normal tissues except for testes.

Activator of ubiquitin ligase activity of RING-type zinc finger-containing E3 ubiquitin-protein ligases that acts as a repressor of autophagy. May enhance ubiquitin ligase activity of TRIM28 and stimulate p53/TP53 ubiquitination by TRIM28. Proposed to act through recruitment and/or stabilization of the Ubl-conjugating enzyme (E2) at the E3:substrate complex. May play a role in tumor transformation or aspects of tumor progression. In vitro promotes cell viability in melanoma cell lines. The sequence is that of Melanoma-associated antigen 6 from Homo sapiens (Human).